Reading from the N-terminus, the 337-residue chain is Biotin synthase (337 aa).

The Radical SAM core domain maps to 39–267 (QEVQVCTLLS…KAMVRLSAGR (229 aa)). Residues cysteine 54, cysteine 58, and cysteine 61 each coordinate [4Fe-4S] cluster. 4 residues coordinate [2Fe-2S] cluster: cysteine 98, cysteine 130, cysteine 190, and arginine 262.

This sequence belongs to the radical SAM superfamily. Biotin synthase family. Homodimer. It depends on [4Fe-4S] cluster as a cofactor. Requires [2Fe-2S] cluster as cofactor.

The catalysed reaction is (4R,5S)-dethiobiotin + (sulfur carrier)-SH + 2 reduced [2Fe-2S]-[ferredoxin] + 2 S-adenosyl-L-methionine = (sulfur carrier)-H + biotin + 2 5'-deoxyadenosine + 2 L-methionine + 2 oxidized [2Fe-2S]-[ferredoxin]. It functions in the pathway cofactor biosynthesis; biotin biosynthesis; biotin from 7,8-diaminononanoate: step 2/2. Functionally, catalyzes the conversion of dethiobiotin (DTB) to biotin by the insertion of a sulfur atom into dethiobiotin via a radical-based mechanism. In Cytophaga hutchinsonii (strain ATCC 33406 / DSM 1761 / CIP 103989 / NBRC 15051 / NCIMB 9469 / D465), this protein is Biotin synthase.